The chain runs to 516 residues: Probable fucosyltransferase 8 (516 aa).

A helical; Signal-anchor for type II membrane protein membrane pass occupies residues 5–25 (ITVVTCLFLLSVMQLSFFNIF). Topologically, residues 26-516 (NYQLLDATTN…ITGLKLVDSN (491 aa)) are lumenal. N-linked (GlcNAc...) asparagine glycans are attached at residues Asn-35, Asn-116, Asn-211, Asn-362, and Asn-463.

This sequence belongs to the glycosyltransferase 37 family. As to expression, expressed in leaves and stems.

It is found in the golgi apparatus. The protein resides in the golgi stack membrane. It functions in the pathway protein modification; protein glycosylation. May be involved in cell wall biosynthesis. May act as a fucosyltransferase. This chain is Probable fucosyltransferase 8 (FUT8), found in Arabidopsis thaliana (Mouse-ear cress).